The following is a 454-amino-acid chain: MSHNDTIVAQATPPGRGGVGILRISGLKARGVAQEVLGKLPKPRYADYLPFKDVDGSALDQGIALWFPGPNSFTGEDVLELQGHGGPVILDLLLKRILTLPGVRIARPGEFSERAFLNDKLDLAQAEAIADLIDASSEQAARSALNSLQGAFSARVNHLVEALTHLRIYVEAAIDFPDEEIDFLSDGKIEAQLNGVIADLDAVRTEARQGSLLREGMKVVIAGRPNAGKSSLLNALAGREAAIVTDIAGTTRDVLREHIHIDGMPLHIIDTAGLRDANDEVERIGIERAWQEIEQADRVLFMVDGTTTDAVDPADIWPDFIARLPKNLPITVVRNKADITGETLGISEVNGHSLVRLSARTGEGVDVLRNNLKQSMGFETNMEGGFLARRRHLQALAEAANHLEQGKAQLLGAWAGELLAEELRLAQQSLSEITGEFTSDDLLGRIFSSFCIGK.

(6S)-5-formyl-5,6,7,8-tetrahydrofolate-binding residues include arginine 23, glutamate 80, and lysine 120. In terms of domain architecture, TrmE-type G spans 216 to 377 (GMKVVIAGRP…LRNNLKQSMG (162 aa)). K(+) is bound at residue asparagine 226. Residues 226-231 (NAGKSS), 245-251 (TDIAGTT), 270-273 (DTAG), 335-338 (NKAD), and 358-360 (SAR) each bind GTP. Serine 230 contacts Mg(2+). The K(+) site is built by threonine 245, isoleucine 247, and threonine 250. Residue threonine 251 coordinates Mg(2+). Lysine 454 provides a ligand contact to (6S)-5-formyl-5,6,7,8-tetrahydrofolate.

Belongs to the TRAFAC class TrmE-Era-EngA-EngB-Septin-like GTPase superfamily. TrmE GTPase family. Homodimer. Heterotetramer of two MnmE and two MnmG subunits. Requires K(+) as cofactor.

The protein resides in the cytoplasm. Functionally, exhibits a very high intrinsic GTPase hydrolysis rate. Involved in the addition of a carboxymethylaminomethyl (cmnm) group at the wobble position (U34) of certain tRNAs, forming tRNA-cmnm(5)s(2)U34. The chain is tRNA modification GTPase MnmE from Salmonella paratyphi A (strain ATCC 9150 / SARB42).